Consider the following 1161-residue polypeptide: DNA-directed RNA polymerase 132 kDa polypeptide (1161 aa).

Belongs to the RNA polymerase beta chain family. The DNA-dependent RNA polymerase used for intermediate and late genes expression consists of eight subunits (147) kDa, (133) kDa, (35) kDa, (30) kDa, (22) kDa, (19) kDa, (18) kDa and (7) kDa totalling more than 500 kDa in mass. The same holoenzyme, with the addition of the transcription-specificity factor RAP94, is used for early gene expression.

Its subcellular location is the virion. It catalyses the reaction RNA(n) + a ribonucleoside 5'-triphosphate = RNA(n+1) + diphosphate. Part of the DNA-dependent RNA polymerase which catalyzes the transcription of viral DNA into RNA using the four ribonucleoside triphosphates as substrates. Responsible for the transcription of early, intermediate and late genes. DNA-dependent RNA polymerase associates with the early transcription factor (ETF), itself composed of D6 and A7, thereby allowing the early genes transcription. Late transcription, and probably also intermediate transcription, require newly synthesized RNA polymerase. The sequence is that of DNA-directed RNA polymerase 132 kDa polypeptide (RPO132) from Fowlpox virus (strain NVSL) (FPV).